Consider the following 159-residue polypeptide: SsrA-binding protein (159 aa).

Basic and acidic residues predominate over residues 131–148 (YDKRQTLREKQDRREAER). A disordered region spans residues 131 to 159 (YDKRQTLREKQDRREAERTISAIKRKQRA).

This sequence belongs to the SmpB family.

It localises to the cytoplasm. Its function is as follows. Required for rescue of stalled ribosomes mediated by trans-translation. Binds to transfer-messenger RNA (tmRNA), required for stable association of tmRNA with ribosomes. tmRNA and SmpB together mimic tRNA shape, replacing the anticodon stem-loop with SmpB. tmRNA is encoded by the ssrA gene; the 2 termini fold to resemble tRNA(Ala) and it encodes a 'tag peptide', a short internal open reading frame. During trans-translation Ala-aminoacylated tmRNA acts like a tRNA, entering the A-site of stalled ribosomes, displacing the stalled mRNA. The ribosome then switches to translate the ORF on the tmRNA; the nascent peptide is terminated with the 'tag peptide' encoded by the tmRNA and targeted for degradation. The ribosome is freed to recommence translation, which seems to be the essential function of trans-translation. The protein is SsrA-binding protein of Streptomyces coelicolor (strain ATCC BAA-471 / A3(2) / M145).